The sequence spans 111 residues: Tubulin beta chain (111 aa).

Residues 82–111 (SEYQQYQDATAEDEGEFDEEEAEGEGQEYA) are disordered. The span at 91-111 (TAEDEGEFDEEEAEGEGQEYA) shows a compositional bias: acidic residues.

This sequence belongs to the tubulin family. In terms of assembly, dimer of alpha and beta chains. A typical microtubule is a hollow water-filled tube with an outer diameter of 25 nm and an inner diameter of 15 nM. Alpha-beta heterodimers associate head-to-tail to form protofilaments running lengthwise along the microtubule wall with the beta-tubulin subunit facing the microtubule plus end conferring a structural polarity. Microtubules usually have 13 protofilaments but different protofilament numbers can be found in some organisms and specialized cells. The cofactor is Mg(2+).

The protein localises to the cytoplasm. The protein resides in the cytoskeleton. In terms of biological role, tubulin is the major constituent of microtubules, a cylinder consisting of laterally associated linear protofilaments composed of alpha- and beta-tubulin heterodimers. Microtubules grow by the addition of GTP-tubulin dimers to the microtubule end, where a stabilizing cap forms. Below the cap, tubulin dimers are in GDP-bound state, owing to GTPase activity of alpha-tubulin. The protein is Tubulin beta chain of Lymnaea stagnalis (Great pond snail).